The primary structure comprises 177 residues: Large ribosomal subunit protein uL6 (177 aa).

A disordered region spans residues 157 to 177 (YKGKGVRYAGEKVRRKEGKKK).

The protein belongs to the universal ribosomal protein uL6 family. In terms of assembly, part of the 50S ribosomal subunit.

Its function is as follows. This protein binds to the 23S rRNA, and is important in its secondary structure. It is located near the subunit interface in the base of the L7/L12 stalk, and near the tRNA binding site of the peptidyltransferase center. The sequence is that of Large ribosomal subunit protein uL6 from Caulobacter vibrioides (strain ATCC 19089 / CIP 103742 / CB 15) (Caulobacter crescentus).